Here is a 472-residue protein sequence, read N- to C-terminus: Sulfate adenylyltransferase subunit 1 (472 aa).

The tr-type G domain occupies 22-239 (KELLRFLTCG…TVPIAGDKNY (218 aa)). The interval 31-38 (GSVDDGKS) is G1. A GTP-binding site is contributed by 31–38 (GSVDDGKS). The tract at residues 89-93 (GITID) is G2. A G3 region spans residues 110–113 (DTPG). Residues 110 to 114 (DTPGH) and 165 to 168 (NKMD) contribute to the GTP site. The segment at 165–168 (NKMD) is G4. Residues 202–204 (SAL) are G5.

The protein belongs to the TRAFAC class translation factor GTPase superfamily. Classic translation factor GTPase family. CysN/NodQ subfamily. Heterodimer composed of CysD, the smaller subunit, and CysN.

It carries out the reaction sulfate + ATP + H(+) = adenosine 5'-phosphosulfate + diphosphate. Its pathway is sulfur metabolism; hydrogen sulfide biosynthesis; sulfite from sulfate: step 1/3. Its function is as follows. With CysD forms the ATP sulfurylase (ATPS) that catalyzes the adenylation of sulfate producing adenosine 5'-phosphosulfate (APS) and diphosphate, the first enzymatic step in sulfur assimilation pathway. APS synthesis involves the formation of a high-energy phosphoric-sulfuric acid anhydride bond driven by GTP hydrolysis by CysN coupled to ATP hydrolysis by CysD. The protein is Sulfate adenylyltransferase subunit 1 of Cellvibrio japonicus (strain Ueda107) (Pseudomonas fluorescens subsp. cellulosa).